The chain runs to 160 residues: Lipoprotein signal peptidase (160 aa).

2 helical membrane-spanning segments follow: residues 60–80 (IEWL…AFFI) and 84–104 (LPFL…AGTV). Active-site residues include D118 and D132. A helical membrane pass occupies residues 128 to 148 (FNIADSCLTVGVIGLLLLYIV).

This sequence belongs to the peptidase A8 family.

It localises to the cell membrane. It carries out the reaction Release of signal peptides from bacterial membrane prolipoproteins. Hydrolyzes -Xaa-Yaa-Zaa-|-(S,diacylglyceryl)Cys-, in which Xaa is hydrophobic (preferably Leu), and Yaa (Ala or Ser) and Zaa (Gly or Ala) have small, neutral side chains.. The protein operates within protein modification; lipoprotein biosynthesis (signal peptide cleavage). In terms of biological role, this protein specifically catalyzes the removal of signal peptides from prolipoproteins. The sequence is that of Lipoprotein signal peptidase from Dehalococcoides mccartyi (strain CBDB1).